The primary structure comprises 354 residues: (R,R)-butanediol dehydrogenase (354 aa).

Residues 10 to 350 (GDIRIEDIPE…NNESAVKIIV (341 aa)) form the Enoyl reductase (ER) domain. Positions 37, 71, and 157 each coordinate Zn(2+).

This sequence belongs to the zinc-containing alcohol dehydrogenase family. Zn(2+) is required as a cofactor.

It catalyses the reaction (R,R)-butane-2,3-diol + NAD(+) = (R)-acetoin + NADH + H(+). The enzyme catalyses (S)-acetoin + NAD(+) = diacetyl + NADH + H(+). Its function is as follows. NAD-dependent butanediol dehydrogenase which catalyzes the oxidation of (R,R)-butane-2,3-diol to (3R)-acetoin and of meso-butane-2,3-diol to (3S)-acetoin. Preferentially oxidizes (R,R)-butane-2,3-diol, with a catalytic efficiency approximately fourfold higher than with meso-butane-2,3-diol. Shows a very low activity with (S,S)-butane-2,3-diol. Can also catalyze the reduction of (3R/3S)-acetoin and diacetyl in the presence of NADH. This is (R,R)-butanediol dehydrogenase from Neisseria gonorrhoeae (strain ATCC 700825 / FA 1090).